The chain runs to 396 residues: Formate-dependent phosphoribosylglycinamide formyltransferase (396 aa).

N(1)-(5-phospho-beta-D-ribosyl)glycinamide-binding positions include 24 to 25 (EL) and Glu84. Residues Arg116, Lys157, 162 to 167 (SSGKGQ), 197 to 200 (EGFV), and Glu205 contribute to the ATP site. Positions 121–310 (RLAAETLGIK…EFALHVRAIL (190 aa)) constitute an ATP-grasp domain. The Mg(2+) site is built by Glu269 and Glu281. N(1)-(5-phospho-beta-D-ribosyl)glycinamide is bound by residues Asp288, Lys359, and 366-367 (RR).

This sequence belongs to the PurK/PurT family. Homodimer.

The enzyme catalyses N(1)-(5-phospho-beta-D-ribosyl)glycinamide + formate + ATP = N(2)-formyl-N(1)-(5-phospho-beta-D-ribosyl)glycinamide + ADP + phosphate + H(+). It functions in the pathway purine metabolism; IMP biosynthesis via de novo pathway; N(2)-formyl-N(1)-(5-phospho-D-ribosyl)glycinamide from N(1)-(5-phospho-D-ribosyl)glycinamide (formate route): step 1/1. Its function is as follows. Involved in the de novo purine biosynthesis. Catalyzes the transfer of formate to 5-phospho-ribosyl-glycinamide (GAR), producing 5-phospho-ribosyl-N-formylglycinamide (FGAR). Formate is provided by PurU via hydrolysis of 10-formyl-tetrahydrofolate. The sequence is that of Formate-dependent phosphoribosylglycinamide formyltransferase from Psychromonas ingrahamii (strain DSM 17664 / CCUG 51855 / 37).